A 909-amino-acid polypeptide reads, in one-letter code: Aconitate hydratase A (909 aa).

[4Fe-4S] cluster contacts are provided by Cys-450, Cys-516, and Cys-519.

The protein belongs to the aconitase/IPM isomerase family. Monomer. [4Fe-4S] cluster is required as a cofactor.

It catalyses the reaction citrate = D-threo-isocitrate. The catalysed reaction is 3-hydroxybutane-1,2,3-tricarboxylate = 2-methyl-cis-aconitate + H2O. The protein operates within carbohydrate metabolism; tricarboxylic acid cycle; isocitrate from oxaloacetate: step 2/2. Involved in both the tricarboxylic acid (TCA) and methylcitric acid cycles. Catalyzes the reversible isomerization of citrate to isocitrate via cis-aconitate. Also catalyzes the rehydration of 2-methyl-cis-aconitate to produce 2-methylisocitrate. The apo form of AcnA functions as a RNA-binding regulatory protein which plays a role in the regulation of citrate concentration and in the sporulation. To prevent the accumulation of excessive levels of citrate, it binds near the 5' end of the citZ mRNA, decreasing its stability and thereby limiting the concentration of citrate synthase in the cell. Aconitase also binds to the gerE transcript late in sporulation and stabilizes it for translation, thereby increasing the rate and level of GerE protein accumulation. The chain is Aconitate hydratase A (citB) from Bacillus subtilis (strain 168).